A 325-amino-acid polypeptide reads, in one-letter code: MQGRVAGSCAPLGLLLVCLHLPGLFARSIGVVEEKVSQNLGTNLPQLGQPSSTGPSNSEHPQPALDPRSNDLARVPLKLSVPASDGFPPAGGSAVQRWPPSWGLPAMDSWPPEDPWQMMAAAAEDRLGEALPEELSYLSSAAALAPGSGPLPGESSPDATGLSPKASLLHQDSESRRLPRSNSLGAGGKILSQRPPWSLIHRVLPDHPWGTLNPSVSWGGGGPGTGWGTRPMPHPEGIWGINNQPPGTSWGNINRYPGGSWGNINRYPGGSWGNINRYPGGSWGNIHLYPGINNPFPPGVLRPPGSSWNIPAGFPNPPSPRLQWG.

The N-terminal stretch at 1–26 (MQGRVAGSCAPLGLLLVCLHLPGLFA) is a signal peptide. The segment covering 41–60 (GTNLPQLGQPSSTGPSNSEH) has biased composition (polar residues). Disordered regions lie at residues 41 to 110 (GTNL…MDSW) and 147 to 189 (GSGP…AGGK). Residues 147 to 157 (GSGPLPGESSP) show a composition bias toward low complexity.

As to quaternary structure, binds to numerous extracellular matrix proteins. In terms of tissue distribution, expressed in skin and tonsils.

It localises to the secreted. It is found in the extracellular space. The protein resides in the extracellular matrix. This is an uncharacterized protein from Homo sapiens (Human).